The chain runs to 547 residues: MSSSPWEPATLRRVFVVGVGMTKFVKPGAENSRDYPDLAEEAGKKALADAQIPYSAVDQACVGYVFGDSTCGQRAIYHSLGMTGIPIINVNNNCATGSTALFMARQLIQGGVAECVLALGFEKMSKGSLGIKFSDRTIPTDKHVDLLINKYGLSAHPVAPQMFGYAGKEHMEKYGTKIEHFAKIGWKNHKHSVNNPYSQFQDEYSLDEVMASKEVFDFLTILQCCPTSDGAAAAILASEAFVQKYGLQSKAVEILAQEMMTDLPSSFEEKSIIKMVGFDMSKEAARKCYEKSGLTPNDIDVIELHDCFSTNELLTYEALGLCPEGQGATLVDRGDNTYGGKWVINPSGGLISKGHPLGATGLAQCAELCWQLRGEAGKRQVPGAKVALQHNLGIGGAVVVTLYKMGFPEAASSFRTHQIEAVPTSSASDGFKANLVFKEIEKKLEEEGEQFVKKIGGIFAFKVKDGPGGKEATWVVDVKNGKGSVLPNSDKKADCTITMADSDFLALMTGKMNPQSAFFQGKLKITGNMGLAMKLQNLQLQPGNAKL.

Residue S3 is modified to Phosphoserine. The residue at position 132 (K132) is an N6-acetyllysine; alternate. Residue K132 is modified to N6-succinyllysine; alternate. Position 168 is an N6-succinyllysine (K168). An N6-acetyllysine mark is found at K173 and K177. At K183 the chain carries N6-acetyllysine; alternate. K183 bears the N6-succinyllysine; alternate mark. K282 is modified (N6-succinyllysine). N6-acetyllysine; alternate occurs at positions 341, 432, 438, 443, and 453. An N6-succinyllysine; alternate mark is found at K341, K432, K438, K443, and K453. Residues 433–543 (ANLVFKEIEK…KLQNLQLQPG (111 aa)) enclose the SCP2 domain. K464 bears the N6-succinyllysine mark. N6-acetyllysine; alternate is present on K470. Position 470 is an N6-succinyllysine; alternate (K470). Residue K479 is modified to N6-succinyllysine. The residue at position 491 (K491) is an N6-acetyllysine. K492 and K511 each carry N6-succinyllysine. At S516 the chain carries Phosphoserine. An N6-succinyllysine mark is found at K522 and K534. Residues 545–547 (AKL) carry the Microbody targeting signal motif.

The protein in the N-terminal section; belongs to the thiolase-like superfamily. Thiolase family. In terms of assembly, interacts with PEX5; the interaction is essential for peroxisomal import. In terms of processing, preSCP2, a protein with a molecular mass of about 15 kDa, is processed into its mature form (SCP2) by proteolytic cleavage of a 20 residue leader sequence after translocation into peroxisomes. In terms of tissue distribution, liver, fibroblasts, and placenta.

It localises to the peroxisome. The protein resides in the cytoplasm. The protein localises to the mitochondrion. It is found in the endoplasmic reticulum. The catalysed reaction is choloyl-CoA + propanoyl-CoA = 3alpha,7alpha,12alpha-trihydroxy-24-oxo-5beta-cholestan-26-oyl-CoA + CoA. It catalyses the reaction 4,8,12-trimethyltridecanoyl-CoA + propanoyl-CoA = 3-oxopristanoyl-CoA + CoA. The enzyme catalyses an acyl-CoA + acetyl-CoA = a 3-oxoacyl-CoA + CoA. It carries out the reaction hexanoyl-CoA + acetyl-CoA = 3-oxooctanoyl-CoA + CoA. The catalysed reaction is tetradecanoyl-CoA + acetyl-CoA = 3-oxohexadecanoyl-CoA + CoA. It catalyses the reaction 3-oxohexadecanedioyl-CoA + CoA = tetradecanedioyl-CoA + acetyl-CoA. The enzyme catalyses propanoyl-CoA + tetradecanoyl-CoA = 3-oxo-2-methylhexadecanoyl-CoA + CoA. It carries out the reaction butanoyl-CoA + acetyl-CoA = 3-oxohexanoyl-CoA + CoA. The catalysed reaction is octanoyl-CoA + acetyl-CoA = 3-oxodecanoyl-CoA + CoA. It catalyses the reaction decanoyl-CoA + acetyl-CoA = 3-oxododecanoyl-CoA + CoA. The enzyme catalyses dodecanoyl-CoA + acetyl-CoA = 3-oxotetradecanoyl-CoA + CoA. It carries out the reaction hexadecanoyl-CoA + acetyl-CoA = 3-oxooctadecanoyl-CoA + CoA. The catalysed reaction is 3-oxo-(9Z-octadecenoyl)-CoA + CoA = (7Z)-hexadecenoyl-CoA + acetyl-CoA. It catalyses the reaction 7-dehydrocholesterol(in) = 7-dehydrocholesterol(out). Its function is as follows. Plays a crucial role in the peroxisomal oxidation of branched-chain fatty acids. Catalyzes the last step of the peroxisomal beta-oxidation of branched chain fatty acids and the side chain of the bile acid intermediates di- and trihydroxycoprostanic acids (DHCA and THCA). Also active with medium and long straight chain 3-oxoacyl-CoAs. Stimulates the microsomal conversion of 7-dehydrocholesterol to cholesterol and transfers phosphatidylcholine and 7-dehydrocholesterol between membrances, in vitro. Isoforms SCP2 and SCPx cooperate in peroxisomal oxidation of certain naturally occurring tetramethyl-branched fatty acyl-CoAs. Functionally, mediates the transfer of all common phospholipids, cholesterol and gangliosides from the endoplasmic reticulum to the plasma membrane. May play a role in regulating steroidogenesis. Stimulates the microsomal conversion of 7-dehydrocholesterol to cholesterol. Also binds fatty acids and fatty acyl Coenzyme A (CoA) such as phytanoyl-CoA. Involved in the regulation phospholipid synthesis in endoplasmic reticulum enhancing the incorporation of exogenous fatty acid into glycerides. Seems to stimulate the rate-limiting step in phosphatidic acid formation mediated by GPAT3. Isoforms SCP2 and SCPx cooperate in peroxisomal oxidation of certain naturally occurring tetramethyl-branched fatty acyl-CoAs. In Homo sapiens (Human), this protein is Sterol carrier protein 2.